The sequence spans 484 residues: Trigger factor (484 aa).

In terms of domain architecture, PPIase FKBP-type spans 162–243; the sequence is GDFISIDLSA…VKSVKERELP (82 aa). Positions 427–484 are disordered; that stretch reads DGNTIDTSEFFGKPPENDVTDLLDDDADGDAGVDADGDTENSAEPADADSADTAQGAG. A compositionally biased stretch (acidic residues) spans 444-476; the sequence is DVTDLLDDDADGDAGVDADGDTENSAEPADADS.

It belongs to the FKBP-type PPIase family. Tig subfamily.

Its subcellular location is the cytoplasm. The catalysed reaction is [protein]-peptidylproline (omega=180) = [protein]-peptidylproline (omega=0). Its function is as follows. Involved in protein export. Acts as a chaperone by maintaining the newly synthesized protein in an open conformation. Functions as a peptidyl-prolyl cis-trans isomerase. This is Trigger factor from Mycobacterium ulcerans (strain Agy99).